We begin with the raw amino-acid sequence, 594 residues long: Golgi-associated RAB2 interactor protein 4 (594 aa).

The disordered stretch occupies residues 387 to 524 (MDAAAGPPVS…TSSGSSKGLG (138 aa)). Residues 396-406 (STRQSKSSLSG) show a composition bias toward polar residues. Composition is skewed to basic and acidic residues over residues 408–433 (HGRE…DRAL), 442–455 (TGES…DKIA), and 468–477 (ANRDDKKEKG). Polar residues predominate over residues 511 to 520 (SLWTTSSGSS).

The protein belongs to the GARIN family. In terms of assembly, interacts (via N-terminus) with RAB2B (in GTP-bound form).

The protein localises to the golgi apparatus. In terms of biological role, RAB2B effector protein required for the compacted Golgi morphology, probably through interaction with small GTPase RAB2B. The sequence is that of Golgi-associated RAB2 interactor protein 4 from Homo sapiens (Human).